The primary structure comprises 360 residues: UDP-N-acetylglucosamine--N-acetylmuramyl-(pentapeptide) pyrophosphoryl-undecaprenol N-acetylglucosamine transferase (360 aa).

UDP-N-acetyl-alpha-D-glucosamine contacts are provided by Ser198 and Gln289.

Belongs to the glycosyltransferase 28 family. MurG subfamily.

Its subcellular location is the cell membrane. It carries out the reaction Mur2Ac(oyl-L-Ala-gamma-D-Glu-L-Lys-D-Ala-D-Ala)-di-trans,octa-cis-undecaprenyl diphosphate + UDP-N-acetyl-alpha-D-glucosamine = beta-D-GlcNAc-(1-&gt;4)-Mur2Ac(oyl-L-Ala-gamma-D-Glu-L-Lys-D-Ala-D-Ala)-di-trans,octa-cis-undecaprenyl diphosphate + UDP + H(+). The protein operates within cell wall biogenesis; peptidoglycan biosynthesis. Its function is as follows. Cell wall formation. Catalyzes the transfer of a GlcNAc subunit on undecaprenyl-pyrophosphoryl-MurNAc-pentapeptide (lipid intermediate I) to form undecaprenyl-pyrophosphoryl-MurNAc-(pentapeptide)GlcNAc (lipid intermediate II). In Streptococcus pyogenes serotype M5 (strain Manfredo), this protein is UDP-N-acetylglucosamine--N-acetylmuramyl-(pentapeptide) pyrophosphoryl-undecaprenol N-acetylglucosamine transferase.